The chain runs to 468 residues: E3 ubiquitin-protein ligase RGLG2 (468 aa).

The tract at residues 1–89 (MGTGNSKENW…PSQSYGSDNK (89 aa)) is disordered. Gly-2 is lipidated: N-myristoyl glycine. The span at 12–45 (QSSFRSTSASSASPSSSSWASQQSYPQYGAESYN) shows a compositional bias: low complexity. Over residues 46–65 (YPPPPSYAQPPEYTQPPPPL) the composition is skewed to pro residues. A compositionally biased stretch (low complexity) spans 66 to 84 (YSTQPYSAPSYSAPPSQSY). One can recognise a VWFA domain in the interval 122–342 (NLIVGIDFTK…KETEFALSAL (221 aa)). The disordered stretch occupies residues 369 to 416 (FPLPPPMRGGSSSYNSPKPSRLPSFKPSVPPHPTEGYHVRSSPVPPPT). An RING-type zinc finger spans residues 425–458 (CPICLSNPKDMAFGCGHQTCCECGPDLQMCPICR).

As to quaternary structure, interacts with the heterodimer UBC35/UEV1B, UBC35 alone, PIN1, but not with UCB2, UCB9, UEV1B or UEV1C alone. Interacts with ERF053. Post-translationally, N-myristoylated. In terms of tissue distribution, ubiquitously expressed.

It is found in the cell membrane. The protein localises to the nucleus. The catalysed reaction is S-ubiquitinyl-[E2 ubiquitin-conjugating enzyme]-L-cysteine + [acceptor protein]-L-lysine = [E2 ubiquitin-conjugating enzyme]-L-cysteine + N(6)-ubiquitinyl-[acceptor protein]-L-lysine.. In terms of biological role, E3 ubiquitin-protein ligase that mediates the formation of 'Lys-63'-linked ubiquitin chains. Regulates apical dominance by acting on the auxin transport proteins abundance. Mediates ubiquitination and subsequent proteasomal degradation of ERF053 in response to drought stress. Acts as a negative regulator of drought stress response. This Arabidopsis thaliana (Mouse-ear cress) protein is E3 ubiquitin-protein ligase RGLG2.